Consider the following 348-residue polypeptide: Lysophosphatidic acid receptor 2 (348 aa).

Residues 1–30 are Extracellular-facing; the sequence is MGHCYYNETIGFFYNNSGKELSSHWRPKDV. N-linked (GlcNAc...) asparagine glycans are attached at residues Asn7 and Asn15. A helical membrane pass occupies residues 31 to 51; that stretch reads VVVALGLTVSVLVLLTNLLVI. At 52–66 the chain is on the cytoplasmic side; the sequence is AAIASNRRFHQPIYY. The helical transmembrane segment at 67–87 threads the bilayer; sequence LLGNLAAADLFAGVAYLFLMF. The Extracellular segment spans residues 88–104; it reads HTGPRTARLSLEGWFLR. A helical membrane pass occupies residues 105-124; that stretch reads QGLLDTSLTASVATLLAIAV. Residues 125–143 lie on the Cytoplasmic side of the membrane; the sequence is ERRRSVMAVQLHSRLPRGR. A helical membrane pass occupies residues 144–164; it reads VVMLIVGVWVAALGLGLLPAH. The Extracellular segment spans residues 165 to 185; that stretch reads SWHCLCALDRCSRMAPLLSRS. Residues 186-206 form a helical membrane-spanning segment; it reads YLAVWALSSLLVFLLMVAVYT. Over 207–239 the chain is Cytoplasmic; that stretch reads RIFFYVRRRVQRMAEHVSCHPRYRETTLSLVKT. The chain crosses the membrane as a helical span at residues 240-260; sequence VVIILGAFVVCWTPGQVVLLL. At 261–276 the chain is on the extracellular side; it reads DGLGCKSCNVLAVEKY. A helical transmembrane segment spans residues 277–294; it reads FLLLAEANSLVNAAVYSC. At 295 to 348 the chain is on the cytoplasmic side; sequence RDAEMRRTFRRLLCCACLRRSTRESAHYTSSAQGGASTRIMLPENGHPLMDSTL. Residue Cys308 is the site of S-palmitoyl cysteine attachment. The short motif at 345-348 is the PDZ-binding element; the sequence is DSTL.

It belongs to the G-protein coupled receptor 1 family. In terms of assembly, interacts with SLC9A3R2/NHERF2, MAGI3 and PLCB3. Interacts with RALA and GRK2.

Its subcellular location is the cell surface. The protein localises to the cell membrane. Receptor for lysophosphatidic acid (LPA), a mediator of diverse cellular activities. Seems to be coupled to the G(i)/G(o), G(12)/G(13), and G(q) families of heteromeric G proteins. Plays a key role in phospholipase C-beta (PLC-beta) signaling pathway. Stimulates phospholipase C (PLC) activity in a manner that is independent of RALA activation. This Macaca fascicularis (Crab-eating macaque) protein is Lysophosphatidic acid receptor 2.